A 219-amino-acid chain; its full sequence is Ion-translocating oxidoreductase complex subunit G (219 aa).

The chain crosses the membrane as a helical span at residues Gly-25–Ala-45. Thr-187 bears the FMN phosphoryl threonine mark.

It belongs to the RnfG family. The complex is composed of six subunits: RnfA, RnfB, RnfC, RnfD, RnfE and RnfG. Requires FMN as cofactor.

Its subcellular location is the cellular chromatophore membrane. In terms of biological role, part of a membrane-bound complex that couples electron transfer with translocation of ions across the membrane. In Cereibacter sphaeroides (strain ATCC 17029 / ATH 2.4.9) (Rhodobacter sphaeroides), this protein is Ion-translocating oxidoreductase complex subunit G.